Consider the following 424-residue polypeptide: Tyrosine--tRNA ligase (424 aa).

Tyrosine 37 lines the L-tyrosine pocket. Residues 42-51 (PTADSLHLGH) carry the 'HIGH' region motif. L-tyrosine is bound by residues tyrosine 175 and glutamine 179. A 'KMSKS' region motif is present at residues 235–239 (KFGKT). Residue lysine 238 coordinates ATP. The region spanning 357-414 (ADLQQALVNAELVPSRGQARTMIGSNAVAINGEKQADPEYVFTDADRLFGRYTLLRRG) is the S4 RNA-binding domain.

The protein belongs to the class-I aminoacyl-tRNA synthetase family. TyrS type 1 subfamily. Homodimer.

The protein resides in the cytoplasm. The enzyme catalyses tRNA(Tyr) + L-tyrosine + ATP = L-tyrosyl-tRNA(Tyr) + AMP + diphosphate + H(+). Catalyzes the attachment of tyrosine to tRNA(Tyr) in a two-step reaction: tyrosine is first activated by ATP to form Tyr-AMP and then transferred to the acceptor end of tRNA(Tyr). The protein is Tyrosine--tRNA ligase of Yersinia pestis bv. Antiqua (strain Antiqua).